Consider the following 130-residue polypeptide: Large ribosomal subunit protein bL12 (130 aa).

The protein belongs to the bacterial ribosomal protein bL12 family. Homodimer. Part of the ribosomal stalk of the 50S ribosomal subunit. Forms a multimeric L10(L12)X complex, where L10 forms an elongated spine to which 2 to 4 L12 dimers bind in a sequential fashion. Binds GTP-bound translation factors.

Functionally, forms part of the ribosomal stalk which helps the ribosome interact with GTP-bound translation factors. Is thus essential for accurate translation. The protein is Large ribosomal subunit protein bL12 of Mycolicibacterium paratuberculosis (strain ATCC BAA-968 / K-10) (Mycobacterium paratuberculosis).